Consider the following 220-residue polypeptide: Redox-sensing transcriptional repressor Rex (220 aa).

Positions 25 to 64 form a DNA-binding region, H-T-H motif; it reads WYLSNVKLLKQKGERYVSSTQISKEINIDASQIAKDLSYV. Residue 99 to 104 participates in NAD(+) binding; sequence GVGSLG.

Belongs to the transcriptional regulatory Rex family. In terms of assembly, homodimer.

It is found in the cytoplasm. In terms of biological role, modulates transcription in response to changes in cellular NADH/NAD(+) redox state. This is Redox-sensing transcriptional repressor Rex from Bacteroides fragilis (strain ATCC 25285 / DSM 2151 / CCUG 4856 / JCM 11019 / LMG 10263 / NCTC 9343 / Onslow / VPI 2553 / EN-2).